A 236-amino-acid polypeptide reads, in one-letter code: Class B acid phosphatase (236 aa).

Positions 1–22 (MNHTLRSITLVLACVASLSANA) are cleaved as a signal peptide. D70 functions as the Nucleophile in the catalytic mechanism. Mg(2+) is bound by residues D70 and D72. The active-site Proton donor is the D72. Substrate contacts are provided by residues 138 to 139 (TG) and K176. D191 lines the Mg(2+) pocket.

It belongs to the class B bacterial acid phosphatase family. In terms of assembly, homotetramer. The cofactor is Mg(2+).

It localises to the periplasm. The catalysed reaction is a phosphate monoester + H2O = an alcohol + phosphate. Its function is as follows. Dephosphorylates several organic phosphate monoesters. Also has a phosphotransferase activity catalyzing the transfer of low-energy phosphate groups from organic phosphate monoesters to free hydroxyl groups of various organic compounds. This chain is Class B acid phosphatase, found in Marinomonas sp. (strain MWYL1).